We begin with the raw amino-acid sequence, 299 residues long: Cuticle collagen 34 (299 aa).

The disordered stretch occupies residues 105–282 (PGPAGTPGKP…GSPGERGICP (178 aa)). The segment covering 129–162 (PGRPPQQPCEPITPPPCKPCPQGPPGPPGPPGPP) has biased composition (pro residues). Positions 164 to 181 (DSGEPGSPGLPGQDAAPG) are enriched in low complexity. Pro residues-rich tracts occupy residues 182–195 (EPGP…PGAP) and 215–233 (PGEP…PGSP). The tract at residues 216 to 278 (GEPGPPGEAG…AGPPGSPGER (63 aa)) is triple-helical region. Positions 251–263 (NGPDGQPGADGNP) are enriched in low complexity. Over residues 265-274 (APGPAGPPGS) the composition is skewed to pro residues.

This sequence belongs to the cuticular collagen family. As to quaternary structure, collagen polypeptide chains are complexed within the cuticle by disulfide bonds and other types of covalent cross-links.

Its function is as follows. Nematode cuticles are composed largely of collagen-like proteins. The cuticle functions both as an exoskeleton and as a barrier to protect the worm from its environment. The sequence is that of Cuticle collagen 34 (col-34) from Caenorhabditis elegans.